A 228-amino-acid polypeptide reads, in one-letter code: Probable U3 small nucleolar RNA-associated protein 11 (228 aa).

Disordered regions lie at residues 1–23 (MSSL…EARK) and 192–211 (SMQK…DDEL). A compositionally biased stretch (basic and acidic residues) spans 12–23 (AHKERSQPEARK).

Belongs to the UTP11 family. Component of the ribosomal small subunit (SSU) processome.

It is found in the nucleus. Its subcellular location is the nucleolus. Involved in nucleolar processing of pre-18S ribosomal RNA. In Arabidopsis thaliana (Mouse-ear cress), this protein is Probable U3 small nucleolar RNA-associated protein 11.